We begin with the raw amino-acid sequence, 235 residues long: Large ribosomal subunit protein bL25 (235 aa).

Disordered regions lie at residues 1–21 and 210–235; these read MADN…PARR and APAA…GAKK. A compositionally biased stretch (low complexity) spans 210 to 222; it reads APAAGAAPAAGGE. Residues 223–235 are compositionally biased toward basic and acidic residues; the sequence is AAKKAPEAKGAKK.

Belongs to the bacterial ribosomal protein bL25 family. CTC subfamily. As to quaternary structure, part of the 50S ribosomal subunit; part of the 5S rRNA/L5/L18/L25 subcomplex. Contacts the 5S rRNA. Binds to the 5S rRNA independently of L5 and L18.

This is one of the proteins that binds to the 5S RNA in the ribosome where it forms part of the central protuberance. This is Large ribosomal subunit protein bL25 from Anaeromyxobacter sp. (strain Fw109-5).